We begin with the raw amino-acid sequence, 235 residues long: Large ribosomal subunit protein uL1 (235 aa).

This sequence belongs to the universal ribosomal protein uL1 family. Part of the 50S ribosomal subunit.

Its function is as follows. Binds directly to 23S rRNA. The L1 stalk is quite mobile in the ribosome, and is involved in E site tRNA release. Functionally, protein L1 is also a translational repressor protein, it controls the translation of the L11 operon by binding to its mRNA. This is Large ribosomal subunit protein uL1 from Lawsonia intracellularis (strain PHE/MN1-00).